A 617-amino-acid polypeptide reads, in one-letter code: Leucine aminopeptidase 2 (617 aa).

Residues 139 to 141 (QCQ) and 271 to 276 (PYGGME) each bind a peptide. Position 300 (His300) interacts with Zn(2+). Catalysis depends on Glu301, which acts as the Proton acceptor. Zn(2+)-binding residues include His304 and Glu323. Tyr388 acts as the Proton donor in catalysis.

This sequence belongs to the peptidase M1 family. Zn(2+) serves as cofactor.

The protein localises to the cytoplasm. Its subcellular location is the nucleus. It carries out the reaction an epoxide + H2O = an ethanediol. Functionally, aminopeptidase that preferentially cleaves di- and tripeptides. Also has low epoxide hydrolase activity (in vitro). Can hydrolyze the epoxide leukotriene LTA(4) but it forms preferentially 5,6-dihydroxy-7,9,11,14-eicosatetraenoic acid rather than the cytokine leukotriene B(4) as the product compared to the homologous mammalian enzyme (in vitro). In Aspergillus terreus (strain NIH 2624 / FGSC A1156), this protein is Leucine aminopeptidase 2.